The chain runs to 146 residues: Small ribosomal subunit protein bS6 (146 aa).

The disordered stretch occupies residues 94-146; the sequence is GPITTPSPMMQEGKSRPPHSSDEDSENTAPAKAKTADSPGEDTRTTEESDPKP. 2 stretches are compositionally biased toward basic and acidic residues: residues 106 to 115 and 134 to 146; these read GKSRPPHSSD and EDTR…DPKP.

This sequence belongs to the bacterial ribosomal protein bS6 family.

In terms of biological role, binds together with bS18 to 16S ribosomal RNA. This is Small ribosomal subunit protein bS6 from Nitrosomonas europaea (strain ATCC 19718 / CIP 103999 / KCTC 2705 / NBRC 14298).